We begin with the raw amino-acid sequence, 267 residues long: Putative carboxymethylenebutenolidase (267 aa).

Residues Cys-137, Asp-194, and His-226 contribute to the active site.

Belongs to the dienelactone hydrolase family.

It carries out the reaction 2-(5-oxo-2,5-dihydrofuran-2-ylidene)acetate + H2O = 4-oxohex-2-enedioate + H(+). This is Putative carboxymethylenebutenolidase from Yersinia pestis.